We begin with the raw amino-acid sequence, 341 residues long: Homeobox protein knotted-1-like 8 (341 aa).

Residues 1-17 (MESFASLAGGGSSSTTA) show a composition bias toward low complexity. 3 disordered regions span residues 1–72 (MESF…AVQG), 121–148 (AAQQ…DQLD), and 187–207 (AESN…SDKQ). Residues 187–196 (AESNCEGTGS) show a composition bias toward polar residues. One can recognise an ELK domain in the interval 207–227 (QLKHQLLRKYGGSLGDLRQVF). A DNA-binding region (homeobox; TALE-type) is located at residues 228 to 291 (SKRTKKGKLP…NQRKRHWKPT (64 aa)).

It belongs to the TALE/KNOX homeobox family.

The protein resides in the nucleus. Probable transcription factor that may be involved in shoot formation during embryogenesis. This Oryza sativa subsp. japonica (Rice) protein is Homeobox protein knotted-1-like 8 (OSH43).